Here is a 118-residue protein sequence, read N- to C-terminus: CLAVATA3/ESR (CLE)-related protein 12 (118 aa).

A signal peptide spans 1–35 (MLRISSSSSMALKFSQILFIVLWLSLFFLLLHHLY). Composition is skewed to basic and acidic residues over residues 75–91 (TPFH…RSGE) and 98–108 (IDPRYGVEKRR). Residues 75–118 (TPFHSRDNSRHNHRSGEQYDGDEIDPRYGVEKRRVPSGPNPLHH) form a disordered region. A hydroxyproline mark is found at proline 110 and proline 113. Proline 113 is a glycosylation site (O-linked (Ara...) hydroxyproline).

Belongs to the CLV3/ESR signal peptide family. In terms of processing, the O-glycosylation (arabinosylation) of the hydroxyproline Pro-113 enhances binding affinity of the CLE12p peptide for its receptor. Mostly expressed in seedlings, roots, flowers, stems and apex, and, to a lower extent, in leaves and siliques.

It is found in the secreted. Its subcellular location is the extracellular space. Functionally, extracellular signal peptide that regulates cell fate. Represses root apical meristem maintenance. This is CLAVATA3/ESR (CLE)-related protein 12 from Arabidopsis thaliana (Mouse-ear cress).